The primary structure comprises 175 residues: Threonylcarbamoyl-AMP synthase (175 aa).

Residues 1-175 (MLHNDDVIAY…IINGKLIRYV (175 aa)) enclose the YrdC-like domain.

This sequence belongs to the SUA5 family. TsaC subfamily.

The protein resides in the cytoplasm. The catalysed reaction is L-threonine + hydrogencarbonate + ATP = L-threonylcarbamoyladenylate + diphosphate + H2O. Required for the formation of a threonylcarbamoyl group on adenosine at position 37 (t(6)A37) in tRNAs that read codons beginning with adenine. Catalyzes the conversion of L-threonine, HCO(3)(-)/CO(2) and ATP to give threonylcarbamoyl-AMP (TC-AMP) as the acyladenylate intermediate, with the release of diphosphate. The polypeptide is Threonylcarbamoyl-AMP synthase (Buchnera aphidicola subsp. Acyrthosiphon pisum (strain APS) (Acyrthosiphon pisum symbiotic bacterium)).